Consider the following 133-residue polypeptide: ATP synthase epsilon chain, chloroplastic (133 aa).

The protein belongs to the ATPase epsilon chain family. F-type ATPases have 2 components, CF(1) - the catalytic core - and CF(0) - the membrane proton channel. CF(1) has five subunits: alpha(3), beta(3), gamma(1), delta(1), epsilon(1). CF(0) has three main subunits: a, b and c.

It localises to the plastid. The protein localises to the chloroplast thylakoid membrane. Produces ATP from ADP in the presence of a proton gradient across the membrane. The polypeptide is ATP synthase epsilon chain, chloroplastic (Psilotum nudum (Whisk fern)).